The following is a 243-amino-acid chain: MPQLALIRHGQSEWNLQNRFTGWVDVDLTDEGVAQARQSGELLAKAGFEPTHAFVSVLKRAIKTLNFTLEGLDRLWIPVDKSWRLNERHYGALAGLDKNETRAKHGDEQVKIWRRSFDTPPPPVATDHAYHPLNDHRYADVPRELLPASESLKSTLDRVEPYWSSSIQPRLAAGETLIVAAHGNSLRALVKLLFKVSDPDIMEVEVPTGNPLLIDLEDDGITLRSARYLDPVRAKPLPPLPGA.

Residues 8 to 15 (RHGQSEWN), 21 to 22 (TG), Arg-60, 87 to 90 (ERHY), Lys-98, 114 to 115 (RR), and 183 to 184 (GN) contribute to the substrate site. The active-site Tele-phosphohistidine intermediate is His-9. Glu-87 acts as the Proton donor/acceptor in catalysis.

Belongs to the phosphoglycerate mutase family. BPG-dependent PGAM subfamily. As to quaternary structure, homodimer.

It carries out the reaction (2R)-2-phosphoglycerate = (2R)-3-phosphoglycerate. It functions in the pathway carbohydrate degradation; glycolysis; pyruvate from D-glyceraldehyde 3-phosphate: step 3/5. Catalyzes the interconversion of 2-phosphoglycerate and 3-phosphoglycerate. The chain is 2,3-bisphosphoglycerate-dependent phosphoglycerate mutase from Maricaulis maris (strain MCS10) (Caulobacter maris).